A 1171-amino-acid polypeptide reads, in one-letter code: ATP-dependent helicase/deoxyribonuclease subunit B (1171 aa).

In terms of domain architecture, UvrD-like helicase ATP-binding spans 1-287; that stretch reads MSLRFVIGRA…IPLMEQPRFH (287 aa). Residue 8–15 coordinates ATP; the sequence is GRAGSGKS. Positions 281-587 constitute a UvrD-like helicase C-terminal domain; it reads MEQPRFHSPA…QFANIPPSLD (307 aa). 4 residues coordinate [4Fe-4S] cluster: Cys805, Cys1129, Cys1132, and Cys1138.

The protein belongs to the helicase family. AddB/RexB type 1 subfamily. Heterodimer of AddA and AddB. Requires Mg(2+) as cofactor. [4Fe-4S] cluster is required as a cofactor.

In terms of biological role, the heterodimer acts as both an ATP-dependent DNA helicase and an ATP-dependent, dual-direction single-stranded exonuclease. Recognizes the chi site generating a DNA molecule suitable for the initiation of homologous recombination. The AddB subunit has 5' -&gt; 3' nuclease activity but not helicase activity. This chain is ATP-dependent helicase/deoxyribonuclease subunit B, found in Bacillus cereus (strain G9842).